The primary structure comprises 693 residues: Guanyl-specific ribonuclease pgl-3 (693 aa).

Residues 205–447 (KKLMIEGPKI…VNRIIESLEK (243 aa)) form an involved in dimerization region. The Proton acceptor role is filled by His-437. Disordered stretches follow at residues 445–468 (LEKS…GPTT), 523–591 (AEKN…DATP), and 620–693 (SSNG…RGGS). A compositionally biased stretch (low complexity) spans 447–468 (KSSSSEPSATAKQTTTSNGPTT). 2 stretches are compositionally biased toward polar residues: residues 528–548 (NTPS…SPTK) and 569–580 (ITKVSPQPQERT). The segment at 581 to 614 (GTAWGSGDATPVPLATPVNEYKVSGFGAAPVASG) is required for interaction with sepa-1. 3 stretches are compositionally biased toward gly residues: residues 625–634 (SGRGSYGGGR), 641–660 (RGAY…SRGY), and 668–693 (RGSY…RGGS). The RNA-binding RGG-box stretch occupies residues 633–693 (GRGGDRGGRG…GFFGGSRGGS (61 aa)).

In terms of assembly, may form a homodimer. Interacts with pgl-1 and pgl-2; this association is not required for P-granule localization of either pgl-1 or pgl-2. Interacts with sepa-1; the interaction is enhanced in the presence of RNA. Interacts with prmt-1; the interaction is direct. In terms of processing, methylated at arginine residues in the RNA-binding RGG-box by prmt-1. Methylation promotes P-granule degradation by autophagy. As to expression, highly expressed in the germline. Expressed in most somatic cells.

The protein resides in the cytoplasmic granule. It carries out the reaction [RNA] containing guanosine + H2O = an [RNA fragment]-3'-guanosine-3'-phosphate + a 5'-hydroxy-ribonucleotide-3'-[RNA fragment].. Its function is as follows. Guanyl-specific endoribonuclease which cleaves the phosphodiester bond in single-stranded RNA between the 3'-guanylic residue and the 5'-OH residue of adjacent nucleotide, resulting in the formation of a corresponding 2',3'-cyclic phosphate intermediate. P-granule component involved in germline development. Together with the P-granule component pgl-1, is involved in the formation of P-granules. Together with pgl-1, probably recruits other granule components such as pos-1, mex-3 and glh-1, and RNA to P-granules. In vitro, binds mRNA; this interaction is required for the formation of liquid-like droplets that resemble P-granules. Most likely recruits pgl-1 into P-granules during autophagy. Associates with adapters such as sepa-1 and is required for the accumulation and degradation of P-granules by autophagy in somatic cells. This ensures exclusive localization of the P-granules in germ cells. In addition, may act redundantly with pgl-1 to protect germ cells from excessive germline apoptosis during normal oogenesis and development of the two gonadal arms. This may in part be through regulating the localization of sir-2.1 which is involved in germ cell apoptosis. May protect somatic cells from excessive apoptosis during normal development. The chain is Guanyl-specific ribonuclease pgl-3 from Caenorhabditis elegans.